Here is a 338-residue protein sequence, read N- to C-terminus: RNA 3'-terminal phosphate cyclase (338 aa).

Residues glutamine 103 and 283-287 (YLADQ) each bind ATP. The Tele-AMP-histidine intermediate role is filled by histidine 308.

It belongs to the RNA 3'-terminal cyclase family. Type 1 subfamily.

The protein localises to the cytoplasm. It catalyses the reaction a 3'-end 3'-phospho-ribonucleotide-RNA + ATP = a 3'-end 2',3'-cyclophospho-ribonucleotide-RNA + AMP + diphosphate. Catalyzes the conversion of 3'-phosphate to a 2',3'-cyclic phosphodiester at the end of RNA. The mechanism of action of the enzyme occurs in 3 steps: (A) adenylation of the enzyme by ATP; (B) transfer of adenylate to an RNA-N3'P to produce RNA-N3'PP5'A; (C) and attack of the adjacent 2'-hydroxyl on the 3'-phosphorus in the diester linkage to produce the cyclic end product. The biological role of this enzyme is unknown but it is likely to function in some aspects of cellular RNA processing. The protein is RNA 3'-terminal phosphate cyclase of Shigella sonnei (strain Ss046).